The following is a 172-amino-acid chain: Shikimate kinase (172 aa).

Residue 11–16 (GAGKST) participates in ATP binding. Ser-15 lines the Mg(2+) pocket. Positions 33, 57, and 79 each coordinate substrate. Arg-117 is a binding site for ATP. Arg-136 contributes to the substrate binding site. An ATP-binding site is contributed by Arg-153.

It belongs to the shikimate kinase family. Monomer. Mg(2+) serves as cofactor.

The protein resides in the cytoplasm. The enzyme catalyses shikimate + ATP = 3-phosphoshikimate + ADP + H(+). It functions in the pathway metabolic intermediate biosynthesis; chorismate biosynthesis; chorismate from D-erythrose 4-phosphate and phosphoenolpyruvate: step 5/7. Its function is as follows. Catalyzes the specific phosphorylation of the 3-hydroxyl group of shikimic acid using ATP as a cosubstrate. The sequence is that of Shikimate kinase from Pseudomonas paraeruginosa (strain DSM 24068 / PA7) (Pseudomonas aeruginosa (strain PA7)).